The sequence spans 413 residues: Probable protein S-acyltransferase 3 (413 aa).

2 helical membrane-spanning segments follow: residues 65–85 (LTSF…LVWI) and 96–116 (VLAS…LTSA). Positions 171–221 (KFCDTCLLYRPPRASHCSICNNCVQRFDHHCPWVGQCIARRNYPFFICFIS) constitute a DHHC domain. Catalysis depends on C201, which acts as the S-palmitoyl cysteine intermediate. Transmembrane regions (helical) follow at residues 216 to 236 (FICF…FSWI) and 255 to 275 (SVIL…LTIF). Positions 364–413 (RDSPRKLPLPTRNLDDIKDISDNYDRSTTTREDASDRDPSFFSSQLDLPK) are disordered. Basic and acidic residues predominate over residues 376–402 (NLDDIKDISDNYDRSTTTREDASDRDP). A compositionally biased stretch (polar residues) spans 404–413 (FFSSQLDLPK).

Belongs to the DHHC palmitoyltransferase family. Expressed in flowers and pollen.

It localises to the endoplasmic reticulum membrane. The protein localises to the cytoplasmic vesicle membrane. The catalysed reaction is L-cysteinyl-[protein] + hexadecanoyl-CoA = S-hexadecanoyl-L-cysteinyl-[protein] + CoA. Its function is as follows. Palmitoyl acyltransferase. The polypeptide is Probable protein S-acyltransferase 3 (PAT03) (Arabidopsis thaliana (Mouse-ear cress)).